Reading from the N-terminus, the 317-residue chain is Acetyl-coenzyme A carboxylase carboxyl transferase subunit alpha (317 aa).

One can recognise a CoA carboxyltransferase C-terminal domain in the interval 39–293 (RLESKAAAAL…GDALAEALTG (255 aa)).

This sequence belongs to the AccA family. Acetyl-CoA carboxylase is a heterohexamer composed of biotin carboxyl carrier protein (AccB), biotin carboxylase (AccC) and two subunits each of ACCase subunit alpha (AccA) and ACCase subunit beta (AccD).

It is found in the cytoplasm. It carries out the reaction N(6)-carboxybiotinyl-L-lysyl-[protein] + acetyl-CoA = N(6)-biotinyl-L-lysyl-[protein] + malonyl-CoA. The protein operates within lipid metabolism; malonyl-CoA biosynthesis; malonyl-CoA from acetyl-CoA: step 1/1. Component of the acetyl coenzyme A carboxylase (ACC) complex. First, biotin carboxylase catalyzes the carboxylation of biotin on its carrier protein (BCCP) and then the CO(2) group is transferred by the carboxyltransferase to acetyl-CoA to form malonyl-CoA. The polypeptide is Acetyl-coenzyme A carboxylase carboxyl transferase subunit alpha (Methylobacterium nodulans (strain LMG 21967 / CNCM I-2342 / ORS 2060)).